The chain runs to 96 residues: MNIRPLHDRVIIKREEVETRSAGGIVLTGSAATKSTRAKVLAVGKGRILENGTVQPLDVKVGDIVIFNDGYGVKSEKIDGEEVLIISENDILAIVE.

It belongs to the GroES chaperonin family. Heptamer of 7 subunits arranged in a ring. Interacts with the chaperonin GroEL.

It localises to the cytoplasm. Functionally, together with the chaperonin GroEL, plays an essential role in assisting protein folding. The GroEL-GroES system forms a nano-cage that allows encapsulation of the non-native substrate proteins and provides a physical environment optimized to promote and accelerate protein folding. GroES binds to the apical surface of the GroEL ring, thereby capping the opening of the GroEL channel. This chain is Co-chaperonin GroES, found in Haemophilus influenzae (strain ATCC 51907 / DSM 11121 / KW20 / Rd).